Here is a 339-residue protein sequence, read N- to C-terminus: Ribosomal RNA small subunit methyltransferase C (339 aa).

The protein belongs to the methyltransferase superfamily. RsmC family. Monomer.

The protein localises to the cytoplasm. The enzyme catalyses guanosine(1207) in 16S rRNA + S-adenosyl-L-methionine = N(2)-methylguanosine(1207) in 16S rRNA + S-adenosyl-L-homocysteine + H(+). Its function is as follows. Specifically methylates the guanine in position 1207 of 16S rRNA in the 30S particle. The polypeptide is Ribosomal RNA small subunit methyltransferase C (Aliivibrio fischeri (strain ATCC 700601 / ES114) (Vibrio fischeri)).